The chain runs to 168 residues: Large ribosomal subunit protein bL9 (168 aa).

The segment at 148–168 is disordered; sequence ENGEGSVQPAAEAAEVASTEA. A compositionally biased stretch (low complexity) spans 157-168; that stretch reads AAEAAEVASTEA.

This sequence belongs to the bacterial ribosomal protein bL9 family.

In terms of biological role, binds to the 23S rRNA. This Herpetosiphon aurantiacus (strain ATCC 23779 / DSM 785 / 114-95) protein is Large ribosomal subunit protein bL9.